The primary structure comprises 664 residues: Intraflagellar transport protein 70A2 (664 aa).

TPR repeat units follow at residues 11 to 44, 45 to 78, 153 to 186, 188 to 220, 395 to 423, 424 to 456, and 458 to 491; these read DGEF…SSRS, RAGL…HPEL, PDGL…SGYQ, DVSY…GIRQ, QVQE…EKYI, PVLM…CNDH, and VWKL…NYDN. Positions 507-534 form a coiled coil; sequence YIMTSQNEEAEELMRKIEKEEEQLSYGD. A TPR 8 repeat occupies 543-576; the sequence is CIVNLVIGTLYCAKGNYDFGISRVIKSLEPYHKK.

Belongs to the TTC30/dfy-1/fleer family. Interacts wit the IFT B complex component IFT52.

It is found in the cell projection. The protein localises to the cilium. Its function is as follows. Required for polyglutamylation of axonemal tubulin. Plays a role in anterograde intraflagellar transport (IFT), the process by which cilia precursors are transported from the base of the cilium to the site of their incorporation at the tip. The polypeptide is Intraflagellar transport protein 70A2 (Ift70a2) (Mus musculus (Mouse)).